A 387-amino-acid chain; its full sequence is Ferrochelatase (387 aa).

Residues H196 and E277 each coordinate Fe cation.

It belongs to the ferrochelatase family.

It is found in the cytoplasm. It carries out the reaction heme b + 2 H(+) = protoporphyrin IX + Fe(2+). The protein operates within porphyrin-containing compound metabolism; protoheme biosynthesis; protoheme from protoporphyrin-IX: step 1/1. In terms of biological role, catalyzes the ferrous insertion into protoporphyrin IX. This chain is Ferrochelatase, found in Cyanothece sp. (strain PCC 7425 / ATCC 29141).